Reading from the N-terminus, the 335-residue chain is BTB and MATH domain-containing protein 39 (335 aa).

Positions 14 to 141 constitute an MATH domain; that stretch reads MKTLCFKIMN…NGVFTIEFDL (128 aa). In terms of domain architecture, BTB spans 161 to 226; that stretch reads ADGKLIVEDQ…LQLDEFKVNV (66 aa).

This Caenorhabditis briggsae protein is BTB and MATH domain-containing protein 39.